The sequence spans 322 residues: MLNSFKLSLQYILPKLWLTRLAGWGASKRAGWLTKLVIDLFVKYYKVDMKEAQKPDTASYRTFNEFFVRPLRDEVRPIDTDPNVLVMPADGVISQLGKIEEDKILQAKGHNYSLEALLAGNYLMADLFRNGTFVTTYLSPRDYHRVHMPCNGILREMIYVPGDLFSVNHLTAQNVPNLFARNERVICLFDTEFGPMAQILVGATIVGSIETVWAGTITPPREGIIKRWTWPAGENDGSVALLKGQEMGRFKLGSTVINLFAPGKVNLVEQLESLSVTKIGQPLAVSTETFVTPDAEPAPLPAEEIEAEHYASPLVDDKKDQV.

Catalysis depends on charge relay system; for autoendoproteolytic cleavage activity residues D90, H147, and S254. S254 (schiff-base intermediate with substrate; via pyruvic acid; for decarboxylase activity) is an active-site residue. At S254 the chain carries Pyruvic acid (Ser); by autocatalysis.

This sequence belongs to the phosphatidylserine decarboxylase family. PSD-B subfamily. Prokaryotic type I sub-subfamily. As to quaternary structure, heterodimer of a large membrane-associated beta subunit and a small pyruvoyl-containing alpha subunit. The cofactor is pyruvate. In terms of processing, is synthesized initially as an inactive proenzyme. Formation of the active enzyme involves a self-maturation process in which the active site pyruvoyl group is generated from an internal serine residue via an autocatalytic post-translational modification. Two non-identical subunits are generated from the proenzyme in this reaction, and the pyruvate is formed at the N-terminus of the alpha chain, which is derived from the carboxyl end of the proenzyme. The autoendoproteolytic cleavage occurs by a canonical serine protease mechanism, in which the side chain hydroxyl group of the serine supplies its oxygen atom to form the C-terminus of the beta chain, while the remainder of the serine residue undergoes an oxidative deamination to produce ammonia and the pyruvoyl prosthetic group on the alpha chain. During this reaction, the Ser that is part of the protease active site of the proenzyme becomes the pyruvoyl prosthetic group, which constitutes an essential element of the active site of the mature decarboxylase.

It is found in the cell membrane. The enzyme catalyses a 1,2-diacyl-sn-glycero-3-phospho-L-serine + H(+) = a 1,2-diacyl-sn-glycero-3-phosphoethanolamine + CO2. It functions in the pathway phospholipid metabolism; phosphatidylethanolamine biosynthesis; phosphatidylethanolamine from CDP-diacylglycerol: step 2/2. Functionally, catalyzes the formation of phosphatidylethanolamine (PtdEtn) from phosphatidylserine (PtdSer). This chain is Phosphatidylserine decarboxylase proenzyme, found in Shigella dysenteriae serotype 1 (strain Sd197).